Reading from the N-terminus, the 380-residue chain is 3-dehydroquinate synthase (380 aa).

It belongs to the archaeal-type DHQ synthase family.

It catalyses the reaction 2-amino-2,3,7-trideoxy-D-lyxo-hept-6-ulosonate + NAD(+) + H2O = 3-dehydroquinate + NH4(+) + NADH + H(+). Its function is as follows. Catalyzes the oxidative deamination and cyclization of 2-amino-3,7-dideoxy-D-threo-hept-6-ulosonic acid (ADH) to yield 3-dehydroquinate (DHQ), which is fed into the canonical shikimic pathway of aromatic amino acid biosynthesis. The chain is 3-dehydroquinate synthase from Methanosarcina mazei (strain ATCC BAA-159 / DSM 3647 / Goe1 / Go1 / JCM 11833 / OCM 88) (Methanosarcina frisia).